Consider the following 309-residue polypeptide: Mitochondrial glycine transporter (309 aa).

Solcar repeat units follow at residues 2–94 (SNVG…LRAL), 124–207 (LTSQ…IKHE), and 219–304 (QATL…GLML). 6 helical membrane passes run 8–33 (LLSG…TRLQ), 69–95 (GTTP…RALM), 130–155 (LIAG…ARFE), 182–205 (GFLA…EGIK), 223–249 (IHGL…KTKI), and 279–297 (GASL…GWAV).

This sequence belongs to the mitochondrial carrier (TC 2.A.29) family. SLC25A38 subfamily.

The protein resides in the mitochondrion inner membrane. The catalysed reaction is glycine(in) = glycine(out). Functionally, mitochondrial glycine transporter that imports glycine into the mitochondrial matrix. Plays an important role in providing glycine for the first enzymatic step in heme biosynthesis, the condensation of glycine with succinyl-CoA to produce 5-aminolevulinate (ALA) in the mitochondrial matrix. The polypeptide is Mitochondrial glycine transporter (Laccaria bicolor (strain S238N-H82 / ATCC MYA-4686) (Bicoloured deceiver)).